Reading from the N-terminus, the 115-residue chain is NADH-ubiquinone oxidoreductase chain 3 (115 aa).

The next 3 membrane-spanning stretches (helical) occupy residues 3–23, 55–75, and 86–106; these read LMLT…IAFW, FFLV…LLPL, and TMLT…AYEW.

This sequence belongs to the complex I subunit 3 family. In terms of assembly, core subunit of respiratory chain NADH dehydrogenase (Complex I) which is composed of 45 different subunits. Interacts with TMEM186. Interacts with TMEM242.

It localises to the mitochondrion inner membrane. The catalysed reaction is a ubiquinone + NADH + 5 H(+)(in) = a ubiquinol + NAD(+) + 4 H(+)(out). Its function is as follows. Core subunit of the mitochondrial membrane respiratory chain NADH dehydrogenase (Complex I) which catalyzes electron transfer from NADH through the respiratory chain, using ubiquinone as an electron acceptor. Essential for the catalytic activity of complex I. The sequence is that of NADH-ubiquinone oxidoreductase chain 3 from Ceratotherium simum (White rhinoceros).